The following is a 359-amino-acid chain: Protein LpfD (359 aa).

Positions 1-24 (MLKKLIMFTGLLGGSVLFSGQALA) are cleaved as a signal peptide.

It belongs to the fimbrial protein family.

The protein resides in the fimbrium. The polypeptide is Protein LpfD (lpfD) (Salmonella typhimurium (strain LT2 / SGSC1412 / ATCC 700720)).